Consider the following 54-residue polypeptide: Large ribosomal subunit protein uL15 (54 aa).

Residues 1–30 (MPSRLRXTRKLRGHVSHGHGRIGKHRKHPG) show a composition bias toward basic residues. The interval 1–42 (MPSRLRXTRKLRGHVSHGHGRIGKHRKHPGGRGNAGGMHHHR) is disordered. His39 carries the (3S)-3-hydroxyhistidine modification. Position 47 is an N6-acetyllysine (Lys47).

It belongs to the universal ribosomal protein uL15 family. Component of the large ribosomal subunit. In terms of processing, hydroxylated on His-39 by MINA.

It is found in the cytoplasm. Its function is as follows. Component of the large ribosomal subunit. The ribosome is a large ribonucleoprotein complex responsible for the synthesis of proteins in the cell. This chain is Large ribosomal subunit protein uL15 (RPL27A), found in Sus scrofa (Pig).